The primary structure comprises 527 residues: Glutamate--cysteine ligase (527 aa).

Belongs to the glutamate--cysteine ligase type 1 family. Type 1 subfamily.

The catalysed reaction is L-cysteine + L-glutamate + ATP = gamma-L-glutamyl-L-cysteine + ADP + phosphate + H(+). It participates in sulfur metabolism; glutathione biosynthesis; glutathione from L-cysteine and L-glutamate: step 1/2. The chain is Glutamate--cysteine ligase from Pseudomonas aeruginosa (strain LESB58).